A 620-amino-acid chain; its full sequence is Glutathione-regulated potassium-efflux system protein KefC (620 aa).

12 helical membrane-spanning segments follow: residues 4-24 (HTLI…PIAV), 26-46 (LGLG…PWGL), 54-74 (SILH…GLEL), 90-110 (GALQ…LLGL), 114-134 (VAEL…MQAM), 149-169 (FAVL…IPLL), 178-198 (MGAF…VVLL), 218-238 (VFSA…EEVG), 270-290 (GLLL…GTLL), 294-314 (LRIV…LWLI), 327-347 (WFAV…GTAQ), and 359-379 (SLTL…VILN). Positions 399–518 (QPRVIIAGFG…AGVEKPERET (120 aa)) constitute an RCK N-terminal domain. Residues 597–620 (GWQGTEEGKHTGNMADEPETKPSS) are disordered.

This sequence belongs to the monovalent cation:proton antiporter 2 (CPA2) transporter (TC 2.A.37) family. KefC subfamily. Homodimer. Interacts with the regulatory subunit KefF.

The protein localises to the cell inner membrane. In terms of biological role, pore-forming subunit of a potassium efflux system that confers protection against electrophiles. Catalyzes K(+)/H(+) antiport. The chain is Glutathione-regulated potassium-efflux system protein KefC from Shigella sonnei (strain Ss046).